Reading from the N-terminus, the 319-residue chain is tRNA pseudouridine synthase B (319 aa).

Asp-49 serves as the catalytic Nucleophile.

Belongs to the pseudouridine synthase TruB family. Type 1 subfamily.

It carries out the reaction uridine(55) in tRNA = pseudouridine(55) in tRNA. Its function is as follows. Responsible for synthesis of pseudouridine from uracil-55 in the psi GC loop of transfer RNAs. The chain is tRNA pseudouridine synthase B from Aeromonas salmonicida (strain A449).